A 328-amino-acid chain; its full sequence is MTTWFPGHMKTTLKRLRDSVSKNDVIVEVRDARIPLSSRNPALETLAANRKRVVVYNKCDLAFPSAGDLCKTRALNSVRAFEETYVETLARWETIQTLRRYVGTVSNVPECIKRLLQLLQKLTYSDHAASNRTVKVFVVGMPNVGKSSVMNALRHASLHRRKVAVVGSHPGVTRNVGEVVRLFEGKNVYMVDTPGIMLPTILQPEDAIKFALVHAMKDGRLHNAVVVDYLLYRLNLIDPNTYTRLSSPTNDVSTFLHNAAVHTGKLGKGGTVNDDLIASYVLQLYRTGFFGAFVLDSMEEEQWQQRLALEKNLVRRNQRRVCSTRKKA.

A CP-type G domain is found at Lys10–Pro199. Residues Asn57–Asp60, Asn143–Ser148, and Gly195 each bind GTP.

The protein belongs to the TRAFAC class YlqF/YawG GTPase family. MTG1 subfamily.

It is found in the mitochondrion inner membrane. Mitochondrial GTPase involved in assembly of the large ribosomal subunit. Plays a role in expression of the mitochondrial translational machinery. This Schizosaccharomyces japonicus (strain yFS275 / FY16936) (Fission yeast) protein is Mitochondrial GTPase 1.